Reading from the N-terminus, the 634-residue chain is MSFLLLTPPPCLLIPPPPLSHRRSSSLFLKHPFQPSPRPLSFCKPSALRLRANTTVNSLKALETIKPYLQSESKTVLLGWLCSCVSVVSLSQIVPRLGSFTSNLNANAASLTKLKGECLVLAGLVLAKVVAYYLQQAFLWEAALNTVYKIRVFAYRRVLERELEFFEGGNGISSGDIAYRITAEASEVADTIYALLNTVVPSAIQISVMTAHMIVASPALTLVSAMVIPSVALLIAYLGDRLRKISRKAQIASAQLSTYLNEVLPAILFVKANNAEISESVRFQRFARADLDERFKKKKMKSLIPQIVQVMYLGSLSIFCVGAVILAGSSLSSSAIVSFVASLAFLIDPVQDLGKAYNELKQGEPAIERLFDLTSLESKVIERPEAIQLEKVAGEVELCDISFKYDENMLPVLDGLNLHIKAGETVALVGPSGGGKTTLIKLLLRLYEPSSGSIIIDKIDIKDIKLESLRKHVGLVSQDTTLFSGTIADNIGYRDLTTGIDMKRVELAAKTANADEFIRNLPEGYNTGVGPRGSSLSGGQKQRLAIARALYQKSSILILDEATSALDSLSELLVREALERVMQDHTVIVIAHRLETVMMAQRVFLVERGKLKELNRSSLLSTHKDSLTSAGLVI.

A chloroplast-targeting transit peptide spans 1-51; that stretch reads MSFLLLTPPPCLLIPPPPLSHRRSSSLFLKHPFQPSPRPLSFCKPSALRLR. A run of 6 helical transmembrane segments spans residues 75–95, 119–139, 195–215, 219–239, 307–327, and 330–350; these read TVLL…QIVP, LVLA…QAFL, LLNT…HMIV, ALTL…AYLG, IVQV…VILA, and SLSS…IDPV. Positions 77-362 constitute an ABC transmembrane type-1 domain; that stretch reads LLGWLCSCVS…LGKAYNELKQ (286 aa). Positions 396-633 constitute an ABC transporter domain; it reads VELCDISFKY…KDSLTSAGLV (238 aa). Residue 430–437 coordinates ATP; it reads GPSGGGKT.

The protein belongs to the ABC transporter superfamily. ABCB family. Multidrug resistance exporter (TC 3.A.1.201) subfamily.

The protein localises to the plastid. It localises to the chloroplast membrane. This is ABC transporter B family member 29, chloroplastic (ABCB29) from Arabidopsis thaliana (Mouse-ear cress).